Here is a 283-residue protein sequence, read N- to C-terminus: Protoheme IX farnesyltransferase 1 (283 aa).

Transmembrane regions (helical) follow at residues 14–34 (IALM…TKVD), 35–55 (PVAL…SAVF), 84–104 (LGFA…NAAF), 107–127 (VVAL…TVWL), 133–153 (TNII…AAAV), 163–183 (VLAL…AILL), 208–228 (ILAN…LGLL), 231–251 (VYGF…VVLV), and 258–278 (WAGW…IAVF).

The protein belongs to the UbiA prenyltransferase family. Protoheme IX farnesyltransferase subfamily.

It localises to the cell inner membrane. It catalyses the reaction heme b + (2E,6E)-farnesyl diphosphate + H2O = Fe(II)-heme o + diphosphate. The protein operates within porphyrin-containing compound metabolism; heme O biosynthesis; heme O from protoheme: step 1/1. Functionally, converts heme B (protoheme IX) to heme O by substitution of the vinyl group on carbon 2 of heme B porphyrin ring with a hydroxyethyl farnesyl side group. In Paramagnetospirillum magneticum (strain ATCC 700264 / AMB-1) (Magnetospirillum magneticum), this protein is Protoheme IX farnesyltransferase 1.